Reading from the N-terminus, the 329-residue chain is tRNA(Ile)-lysidine synthase (329 aa).

ATP is bound at residue 37–42; the sequence is SGGSDS.

The protein belongs to the tRNA(Ile)-lysidine synthase family.

It localises to the cytoplasm. The enzyme catalyses cytidine(34) in tRNA(Ile2) + L-lysine + ATP = lysidine(34) in tRNA(Ile2) + AMP + diphosphate + H(+). Functionally, ligates lysine onto the cytidine present at position 34 of the AUA codon-specific tRNA(Ile) that contains the anticodon CAU, in an ATP-dependent manner. Cytidine is converted to lysidine, thus changing the amino acid specificity of the tRNA from methionine to isoleucine. The chain is tRNA(Ile)-lysidine synthase from Zymomonas mobilis subsp. mobilis (strain ATCC 31821 / ZM4 / CP4).